Reading from the N-terminus, the 879-residue chain is Alanine--tRNA ligase (879 aa).

H566, H570, C668, and H672 together coordinate Zn(2+).

The protein belongs to the class-II aminoacyl-tRNA synthetase family. Zn(2+) serves as cofactor.

It is found in the cytoplasm. The catalysed reaction is tRNA(Ala) + L-alanine + ATP = L-alanyl-tRNA(Ala) + AMP + diphosphate. Functionally, catalyzes the attachment of alanine to tRNA(Ala) in a two-step reaction: alanine is first activated by ATP to form Ala-AMP and then transferred to the acceptor end of tRNA(Ala). Also edits incorrectly charged Ser-tRNA(Ala) and Gly-tRNA(Ala) via its editing domain. The protein is Alanine--tRNA ligase of Listeria monocytogenes serovar 1/2a (strain ATCC BAA-679 / EGD-e).